The chain runs to 741 residues: Polyribonucleotide nucleotidyltransferase (741 aa).

Mg(2+) is bound by residues Asp489 and Asp495. A KH domain is found at 556–615 (PKIDSIQIPVDKIKVVIGKGGETIDKIIAETGVTIDIDEEGLVQIFSSDQDAIDRAKTII). An S1 motif domain is found at 625–693 (GEVYTVPVVR…EKGRVDASIK (69 aa)). The segment at 696 to 741 (LPKPEKNEDGENGEEHRHCCCSHHKPDHHSESMEAPKKSDESETKE) is disordered. 2 stretches are compositionally biased toward basic and acidic residues: residues 698 to 713 (KPEKNEDGENGEEHRH) and 723 to 741 (HHSESMEAPKKSDESETKE).

This sequence belongs to the polyribonucleotide nucleotidyltransferase family. Mg(2+) serves as cofactor.

It is found in the cytoplasm. The catalysed reaction is RNA(n+1) + phosphate = RNA(n) + a ribonucleoside 5'-diphosphate. Involved in mRNA degradation. Catalyzes the phosphorolysis of single-stranded polyribonucleotides processively in the 3'- to 5'-direction. The chain is Polyribonucleotide nucleotidyltransferase from Streptococcus thermophilus (strain ATCC BAA-491 / LMD-9).